We begin with the raw amino-acid sequence, 183 residues long: Oleosin Bn-V (183 aa).

Residues 1 to 47 (PARTHHDITTRDQYPLISRDRDQYGMIGRDQYNMSGQNYSKSRQIAK) are polar. Repeats lie at residues 11–20 (RDQYPLISRD) and 21–30 (RDQYGMIGRD). The interval 48–119 (ATTAVTAGDS…AAITVFSWIY (72 aa)) is hydrophobic. 2 helical membrane passes run 57–77 (SLLV…IVAT) and 99–119 (TGFL…SWIY). The disordered stretch occupies residues 154–183 (YGQQHTGEEHDRDRDHRTDRDRTRGTQHTT). Residues 159–177 (TGEEHDRDRDHRTDRDRTR) show a composition bias toward basic and acidic residues.

Belongs to the oleosin family.

It localises to the lipid droplet. The protein localises to the membrane. Functionally, may have a structural role to stabilize the lipid body during desiccation of the seed by preventing coalescence of the oil. Probably interacts with both lipid and phospholipid moieties of lipid bodies. May also provide recognition signals for specific lipase anchorage in lipolysis during seedling growth. This is Oleosin Bn-V from Brassica napus (Rape).